Reading from the N-terminus, the 657-residue chain is Protein PSK SIMULATOR 1 (657 aa).

Composition is skewed to polar residues over residues 1-15 (MGGL…NNAP), 26-39 (HLNN…SHSG), 62-76 (ESFS…SHPQ), and 540-556 (RSPN…SHNP). Disordered regions lie at residues 1 to 80 (MGGL…NIED) and 534 to 559 (PVKS…PSMG). G2 carries the N-myristoyl glycine lipid modification.

It is found in the nucleus. In terms of biological role, promotes seedling growth probably via the regulation of phytosulfokine (PSK) signaling; PSK are peptide phytohormones acting as growth factors. Together with PSI2 and PSI3, required during vegetative growth and reproduction. May also have a function in carbohydrate metabolism. The sequence is that of Protein PSK SIMULATOR 1 from Arabidopsis thaliana (Mouse-ear cress).